The chain runs to 90 residues: Conotoxin Mr22.1 (90 aa).

A signal peptide spans 1 to 18 (MMTRVFFAMFFLMALTEG). The propeptide occupies 19 to 49 (WPRLYDSDCVRGRNMHITCFKDQTCGLTVKR). At Trp75 the chain carries 6'-bromotryptophan.

This sequence belongs to the E superfamily. Post-translationally, contains 4 disulfide bonds. In terms of tissue distribution, expressed by the venom duct.

The protein resides in the secreted. This Conus marmoreus (Marble cone) protein is Conotoxin Mr22.1.